The primary structure comprises 144 residues: Mediator of RNA polymerase II transcription subunit 10 (144 aa).

The protein belongs to the Mediator complex subunit 10 family. As to quaternary structure, component of the Mediator complex.

It localises to the cytoplasm. It is found in the nucleus. Its subcellular location is the nucleus envelope. In terms of biological role, component of the Mediator complex, a coactivator involved in the regulated transcription of nearly all RNA polymerase II-dependent genes. Mediator functions as a bridge to convey information from gene-specific regulatory proteins to the basal RNA polymerase II transcription machinery. Mediator is recruited to promoters by direct interactions with regulatory proteins and serves as a scaffold for the assembly of a functional preinitiation complex with RNA polymerase II and the general transcription factors. The chain is Mediator of RNA polymerase II transcription subunit 10 (med10) from Schizosaccharomyces pombe (strain 972 / ATCC 24843) (Fission yeast).